Consider the following 456-residue polypeptide: Shootin-1 (456 aa).

At M1 the chain carries N-acetylmethionine. Residues S3 and S4 each carry the phosphoserine modification. Residues 7 to 353 (EKQLQLITSL…RVNQSENSVP (347 aa)) are a coiled coil. Residues S101 and S249 each carry the phosphoserine; by PAK1 modification. Disordered regions lie at residues 343-405 (KRVN…VTDL) and 418-445 (KKGV…CESA). The span at 352 to 369 (VPPPPPPPPPLPPPPPNP) shows a compositional bias: pro residues. At S375 the chain carries Phosphoserine.

Belongs to the shootin family. In terms of assembly, interacts with L1CAM; this interaction occurs in axonal growth cones. Interacts with actin filament retrograde flow; this interaction is enhanced in a netrin-1- and PAK1-dependent manner and promotes F-actin-substrate coupling and concomitant formation of traction forces at axonal growth cones. Interacts with RUFY3. Interacts with PFN2. Interacts (via N-terminus) with KIF20B; this interaction is direct and promotes the association of SHTN1 to microtubules in primary neurons. Associates with microtubule. In terms of processing, phosphorylated on Ser-101 and Ser-249 by PAK1 through a CDC42- and RAC1-dependent signaling pathway, which enhances its association with F-actin retrograde flow in filopodia and lamellipodia of axonal growth cones. Phosphorylation on Ser-101 and Ser-249 is increased by netrin-1.

It localises to the perikaryon. It is found in the cell projection. The protein localises to the axon. The protein resides in the growth cone. Its subcellular location is the cytoplasm. It localises to the cytoskeleton. It is found in the filopodium. The protein localises to the lamellipodium. Functionally, involved in the generation of internal asymmetric signals required for neuronal polarization and neurite outgrowth. Mediates netrin-1-induced F-actin-substrate coupling or 'clutch engagement' within the axon growth cone through activation of CDC42, RAC1 and PAK1-dependent signaling pathway, thereby converting the F-actin retrograde flow into traction forces, concomitantly with filopodium extension and axon outgrowth. Plays a role in cytoskeletal organization by regulating the subcellular localization of phosphoinositide 3-kinase (PI3K) activity at the axonal growth cone. Also plays a role in regenerative neurite outgrowth. In the developing cortex, cooperates with KIF20B to promote both the transition from the multipolar to the bipolar stage and the radial migration of cortical neurons from the ventricular zone toward the superficial layer of the neocortex. Involved in the accumulation of phosphatidylinositol 3,4,5-trisphosphate (PIP3) in the growth cone of primary hippocampal neurons. The polypeptide is Shootin-1 (Pongo abelii (Sumatran orangutan)).